A 463-amino-acid polypeptide reads, in one-letter code: Methionine aminopeptidase 2-2 (463 aa).

A disordered region spans residues 1–97 (MGSKSPEGHW…TLSVTELKQT (97 aa)). Polar residues predominate over residues 27-36 (DPQTSQNGSG). Positions 46-57 (GDDDDDDEDAEE) are enriched in acidic residues. The segment covering 69–85 (KKKKRKKSNKKKKKKTK) has biased composition (basic residues). A compositionally biased stretch (polar residues) spans 86–97 (SGTLSVTELKQT). Histidine 215 provides a ligand contact to substrate. A divalent metal cation-binding residues include aspartate 236, aspartate 247, and histidine 316. Histidine 324 provides a ligand contact to substrate. Positions 349 and 444 each coordinate a divalent metal cation.

The protein belongs to the peptidase M24A family. Methionine aminopeptidase eukaryotic type 2 subfamily. Co(2+) is required as a cofactor. Requires Zn(2+) as cofactor. The cofactor is Mn(2+). It depends on Fe(2+) as a cofactor.

It is found in the cytoplasm. It catalyses the reaction Release of N-terminal amino acids, preferentially methionine, from peptides and arylamides.. Its function is as follows. Cotranslationally removes the N-terminal methionine from nascent proteins. The N-terminal methionine is often cleaved when the second residue in the primary sequence is small and uncharged (Met-Ala-, Cys, Gly, Pro, Ser, Thr, or Val). This Neosartorya fischeri (strain ATCC 1020 / DSM 3700 / CBS 544.65 / FGSC A1164 / JCM 1740 / NRRL 181 / WB 181) (Aspergillus fischerianus) protein is Methionine aminopeptidase 2-2.